The primary structure comprises 253 residues: Ribonuclease HII (253 aa).

The 184-residue stretch at 70 to 253 (NLIAGIDEVG…KSFEPIKSML (184 aa)) folds into the RNase H type-2 domain. A divalent metal cation-binding residues include D76, E77, and D168.

Belongs to the RNase HII family. Mn(2+) is required as a cofactor. Mg(2+) serves as cofactor.

The protein resides in the cytoplasm. The catalysed reaction is Endonucleolytic cleavage to 5'-phosphomonoester.. Functionally, endonuclease that specifically degrades the RNA of RNA-DNA hybrids. This chain is Ribonuclease HII, found in Streptococcus agalactiae serotype Ia (strain ATCC 27591 / A909 / CDC SS700).